Here is a 454-residue protein sequence, read N- to C-terminus: tRNA-2-methylthio-N(6)-dimethylallyladenosine synthase (454 aa).

One can recognise an MTTase N-terminal domain in the interval 6 to 122; that stretch reads RHYHITTFGC…LKDLLESVFD (117 aa). [4Fe-4S] cluster-binding residues include Cys15, Cys51, Cys85, Cys157, Cys161, and Cys164. The 239-residue stretch at 143-381 folds into the Radical SAM core domain; it reads RDSKVTAWVN…HLGNLKVAER (239 aa). The TRAM domain maps to 383-447; it reads QRYFGRIEEV…PFSLTGQPVE (65 aa).

The protein belongs to the methylthiotransferase family. MiaB subfamily. In terms of assembly, monomer. Requires [4Fe-4S] cluster as cofactor.

It is found in the cytoplasm. The enzyme catalyses N(6)-dimethylallyladenosine(37) in tRNA + (sulfur carrier)-SH + AH2 + 2 S-adenosyl-L-methionine = 2-methylsulfanyl-N(6)-dimethylallyladenosine(37) in tRNA + (sulfur carrier)-H + 5'-deoxyadenosine + L-methionine + A + S-adenosyl-L-homocysteine + 2 H(+). In terms of biological role, catalyzes the methylthiolation of N6-(dimethylallyl)adenosine (i(6)A), leading to the formation of 2-methylthio-N6-(dimethylallyl)adenosine (ms(2)i(6)A) at position 37 in tRNAs that read codons beginning with uridine. In Nostoc punctiforme (strain ATCC 29133 / PCC 73102), this protein is tRNA-2-methylthio-N(6)-dimethylallyladenosine synthase.